A 748-amino-acid chain; its full sequence is Photosystem I P700 chlorophyll a apoprotein A1 (748 aa).

8 consecutive transmembrane segments (helical) span residues 69–92 (IFSA…FHGA), 155–178 (LYVT…FHYH), 194–218 (LNHH…HVSL), 290–308 (VAHH…GHMY), 345–368 (WHAN…HHMY), 384–410 (LSLF…IYMV), 432–454 (AIIS…LYIH), and 529–547 (FMVH…LILL). 2 residues coordinate [4Fe-4S] cluster: Cys-571 and Cys-580. The next 2 membrane-spanning stretches (helical) occupy residues 587–608 (HVFL…HFSW) and 662–684 (LSAY…MFLF). His-673 is a binding site for chlorophyll a'. Residues Met-681 and Tyr-689 each coordinate chlorophyll a. Trp-690 provides a ligand contact to phylloquinone. A helical membrane pass occupies residues 722-742 (AVGVAHYLLGGIATTWAFFLA).

It belongs to the PsaA/PsaB family. As to quaternary structure, the PsaA/B heterodimer binds the P700 chlorophyll special pair and subsequent electron acceptors. PSI consists of a core antenna complex that captures photons, and an electron transfer chain that converts photonic excitation into a charge separation. The eukaryotic PSI reaction center is composed of at least 11 subunits. P700 is a chlorophyll a/chlorophyll a' dimer, A0 is one or more chlorophyll a, A1 is one or both phylloquinones and FX is a shared 4Fe-4S iron-sulfur center. serves as cofactor.

The protein resides in the plastid. The protein localises to the chloroplast thylakoid membrane. The catalysed reaction is reduced [plastocyanin] + hnu + oxidized [2Fe-2S]-[ferredoxin] = oxidized [plastocyanin] + reduced [2Fe-2S]-[ferredoxin]. In terms of biological role, psaA and PsaB bind P700, the primary electron donor of photosystem I (PSI), as well as the electron acceptors A0, A1 and FX. PSI is a plastocyanin/cytochrome c6-ferredoxin oxidoreductase, converting photonic excitation into a charge separation, which transfers an electron from the donor P700 chlorophyll pair to the spectroscopically characterized acceptors A0, A1, FX, FA and FB in turn. Oxidized P700 is reduced on the lumenal side of the thylakoid membrane by plastocyanin or cytochrome c6. This chain is Photosystem I P700 chlorophyll a apoprotein A1, found in Cyanidioschyzon merolae (strain NIES-3377 / 10D) (Unicellular red alga).